The sequence spans 1413 residues: MNQELTNNPFNPLTPPKVFDEIKVSLASPERILSWSYGEIKKPETINYRTFKPERDGLFCARIFGPIKDYECLCGKYKRMKYRGVVCEKCGVEVTLQKVRRERMGHIELAAPVAHIWFLKSLPSRIGLMLDMTLRDLERILYFENYVVTEPGLTDLTYGQLMTEEEFMDAQDQYGMDAFTANIGAEAIREMLSQIDLEAEAEQLRADLAEATGELKPKKIIKRLKVVESFLESGNRPEWMVLTVIPVIPPELRPLVPLDGGRFATSDLNDLYRRVINRNNRLKRLIELRAPDIIVRNEKRMLQESVDALFDNGRRGRVITGANKRPLKSLSDMLKGKQGRFRQNLLGKRVDFSGRSVIVTGPELKLHQCGLPKKMALELFKPFIYSRLEAKGLSSTVKQAKKLVEKERPEVWDILDEVIREHPVLLNRAPTLHRLGIQAFEPILIEGKAIQLHPLVCSAFNADFDGDQMAVHVPLSLEAQLEARVLMMSTNNVLSPANGAPIIVPSQDMILGLYYLTLEREGMVGEGKIFGSIDEVQHALDAGEVHLHTKITARIAQIDDEGNEVLKRVETTPGRVRLGALLPMNNKAPFELVNRLLRKKEVQQVIDTVYRYCGQKESVIFCDQIMTMGFREAFKAGISFGKDDMVIPDDKWGIVDETRDQVKDFEQQYMDGLITQGEKYNKVVDAWSKCNDRVTEAMMSTISADKRDENGAVMEPNSVYMMAHSGARGSVTQMKQLGGMRGLMAKPNGDIIETPIISNFKEGLTVLEYFNSTHGARKGLSDTALKTANSGYLTRRLVDVAQDCIVREHDCGTDRGVTAEAAVNDGEVVASLAERVLGRVAADDILRPGTEEVLVAAGQLIDERMADAIHEAGVQTSRVRSPLTCESEEGVCAMCYGRDLARGTMVNQGEAVGIIAAQSIGEPGTQLTMRTFHIGGVAQGGQQSFQEANQDGTITFENPQLLLNASGESLVMGRNMKLLIKDAQGEERASFKLGYGSKLFVKDGAQIKRGDKLFEWDPYTLPIIAEKAGTAKYVDLVSGIAVRDETDEATGMTQKIVIDWRAAPKGSDLKPEIILVDSDGEPVRNDAGNPVHYPMSVDAILSIEDGQVIEAGDVIARIPREGAKTKDITGGLPRVAELFEARRPKDHAIIAEIDGYVRFGRDYKNKRRISIEPSNEAMEPVEYMVPKGKHIPVQEGDFVQKGDYIMDGNPAPHDILSILGVEALANYMVKEVQEVYRLQGVKINDKHIEVIVRQMLQKWEISDSGDTTLLKGEHVDKQEFDAANEKTIARGGRPASGEPILLGITKASLQTRSFISAASFQETTRVLTEASVQGKKDKLVGLKENVIVGRLIPAGTGGATQQMRHIATQRDNVVIAARREEAEAAAALAAPIMDADIVDDDFDTLVDTPESRD.

Zn(2+) contacts are provided by C72, C74, C87, and C90. Mg(2+)-binding residues include D463, D465, and D467. 4 residues coordinate Zn(2+): C811, C885, C892, and C895.

It belongs to the RNA polymerase beta' chain family. In terms of assembly, the RNAP catalytic core consists of 2 alpha, 1 beta, 1 beta' and 1 omega subunit. When a sigma factor is associated with the core the holoenzyme is formed, which can initiate transcription. Mg(2+) serves as cofactor. It depends on Zn(2+) as a cofactor.

It catalyses the reaction RNA(n) + a ribonucleoside 5'-triphosphate = RNA(n+1) + diphosphate. Functionally, DNA-dependent RNA polymerase catalyzes the transcription of DNA into RNA using the four ribonucleoside triphosphates as substrates. This Ruegeria pomeroyi (strain ATCC 700808 / DSM 15171 / DSS-3) (Silicibacter pomeroyi) protein is DNA-directed RNA polymerase subunit beta'.